The primary structure comprises 68 residues: uncharacterized protein (68 aa).

This is an uncharacterized protein from Dictyostelium discoideum (Social amoeba).